Consider the following 284-residue polypeptide: uncharacterized protein (284 aa).

The signal sequence occupies residues 1–20; sequence MLHNIQSILQFLLFVSSVQA. The Apple domain occupies 38–121; that stretch reads CFEFKKNYWI…FTVNFFRNIC (84 aa). Disulfide bonds link cysteine 38-cysteine 121, cysteine 63-cysteine 89, and cysteine 67-cysteine 77. An N-linked (GlcNAc...) asparagine glycan is attached at asparagine 256. The chain crosses the membrane as a helical span at residues 264-284; that stretch reads SSTGLKFTTGLLIILVVFLFL.

The protein resides in the membrane. This is an uncharacterized protein from Caenorhabditis elegans.